We begin with the raw amino-acid sequence, 548 residues long: ComP-specific O-oligosaccharyltransferase (548 aa).

12 helical membrane passes run Ile-8–Asn-28, Leu-32–Val-52, Trp-68–Phe-88, Phe-91–Glu-111, Ile-119–Ile-139, Leu-164–Leu-184, Ser-189–Thr-209, Ser-213–Ile-233, Ile-239–Ile-259, Met-331–Ile-351, Leu-363–Ala-383, and Thr-418–Ile-438.

Belongs to the PglL O-oligosaccharyltransferase family.

It localises to the cell membrane. In terms of biological role, specifically catalyzes the glycosylation of the pilin-like competence factor ComP. In Acinetobacter baylyi (strain ATCC 33305 / BD413 / ADP1), this protein is ComP-specific O-oligosaccharyltransferase.